The primary structure comprises 688 residues: GTPase IMAP family member 8 (688 aa).

Residues 22–44 form a disordered region; sequence TSIGQGERPRASRGQESNFKQSQ. Positions 35 to 44 are enriched in polar residues; the sequence is GQESNFKQSQ. AIG1-type G domains are found at residues 46 to 246, 281 to 471, and 472 to 681; these read TSTL…TENS, TPEL…VIRE, and KELL…SAVG. The interval 55–62 is G1; it reads GKQGAGKS. GTP contacts are provided by residues 55–63 and S76; that span reads GKQGAGKSA. The segment at 82 to 86 is G2; sequence MVTKR. The tract at residues 103 to 106 is G3; that stretch reads DTPD. A G4 region spans residues 171 to 174; sequence TRED. Residues 172–174 and N208 each bind GTP; that span reads RED. The segment at 207–209 is G5; the sequence is NNK.

This sequence belongs to the TRAFAC class TrmE-Era-EngA-EngB-Septin-like GTPase superfamily. AIG1/Toc34/Toc159-like paraseptin GTPase family. IAN subfamily. Spleen, thymus and T-cells. Greatly reduced in T-cells from lymphopenic rats.

The protein localises to the endoplasmic reticulum. It is found in the golgi apparatus. It localises to the mitochondrion. The protein resides in the cytoplasm. Its subcellular location is the cytosol. Functionally, exerts an anti-apoptotic effect in the immune system and is involved in responses to infections. This chain is GTPase IMAP family member 8 (Gimap8), found in Rattus norvegicus (Rat).